The primary structure comprises 485 residues: Phosphoglucosamine mutase (485 aa).

Residue serine 133 is the Phosphoserine intermediate of the active site. Mg(2+)-binding residues include serine 133, aspartate 274, aspartate 276, and aspartate 278. Serine 133 bears the Phosphoserine mark.

It belongs to the phosphohexose mutase family. Requires Mg(2+) as cofactor. Activated by phosphorylation.

The enzyme catalyses alpha-D-glucosamine 1-phosphate = D-glucosamine 6-phosphate. Its function is as follows. Catalyzes the conversion of glucosamine-6-phosphate to glucosamine-1-phosphate. The sequence is that of Phosphoglucosamine mutase from Crocosphaera subtropica (strain ATCC 51142 / BH68) (Cyanothece sp. (strain ATCC 51142)).